The primary structure comprises 183 residues: Apo-citrate lyase phosphoribosyl-dephospho-CoA transferase (183 aa).

It belongs to the CitX family.

It catalyses the reaction apo-[citrate lyase ACP] + 2'-(5''-triphospho-alpha-D-ribosyl)-3'-dephospho-CoA = holo-[citrate lyase ACP] + diphosphate. Transfers 2-(5''-triphosphoribosyl)-3'-dephosphocoenzyme-A on a serine residue to the apo-acyl carrier protein (gamma chain) of the citrate lyase to yield holo-acyl carrier protein. This Citrobacter koseri (strain ATCC BAA-895 / CDC 4225-83 / SGSC4696) protein is Apo-citrate lyase phosphoribosyl-dephospho-CoA transferase.